A 313-amino-acid chain; its full sequence is Formimidoylglutamase (313 aa).

His130, Asp155, His157, Asp159, Asp241, and Asp243 together coordinate Mn(2+).

This sequence belongs to the arginase family. It depends on Mn(2+) as a cofactor.

The catalysed reaction is N-formimidoyl-L-glutamate + H2O = formamide + L-glutamate. Its pathway is amino-acid degradation; L-histidine degradation into L-glutamate; L-glutamate from N-formimidoyl-L-glutamate (hydrolase route): step 1/1. In terms of biological role, catalyzes the conversion of N-formimidoyl-L-glutamate to L-glutamate and formamide. The protein is Formimidoylglutamase of Salmonella paratyphi A (strain ATCC 9150 / SARB42).